The following is a 202-amino-acid chain: MDLERIYRDAGAYLKGHFLLTSGNHSQFYLQSAKVLEYPQLAGRLADELARIIAAHGVEFDSVCSPALGGILAGYELARAAKKRFIFTERVDKVMTLRRGFEVKKGERFIVCEDIITTGGSALEAANIIKGLGGEVVGFAALANRGFCSLANLKNEAKSNCKLPSDVPLFALGNFEFEIYAPENCPLCASGSQAIKPGSRGN.

5-phospho-alpha-D-ribose 1-diphosphate is bound by residues Lys-93 and 113–121 (EDIITTGGS). Residues Thr-117 and Arg-145 each coordinate orotate.

It belongs to the purine/pyrimidine phosphoribosyltransferase family. PyrE subfamily. In terms of assembly, homodimer. Requires Mg(2+) as cofactor.

The catalysed reaction is orotidine 5'-phosphate + diphosphate = orotate + 5-phospho-alpha-D-ribose 1-diphosphate. The protein operates within pyrimidine metabolism; UMP biosynthesis via de novo pathway; UMP from orotate: step 1/2. Functionally, catalyzes the transfer of a ribosyl phosphate group from 5-phosphoribose 1-diphosphate to orotate, leading to the formation of orotidine monophosphate (OMP). The protein is Orotate phosphoribosyltransferase of Campylobacter curvus (strain 525.92).